Here is a 218-residue protein sequence, read N- to C-terminus: Large ribosomal subunit protein uL4 (218 aa).

The disordered stretch occupies residues Ala-46–Arg-102. Basic residues predominate over residues Gly-62–Gly-73.

It belongs to the universal ribosomal protein uL4 family. Part of the 50S ribosomal subunit.

Functionally, one of the primary rRNA binding proteins, this protein initially binds near the 5'-end of the 23S rRNA. It is important during the early stages of 50S assembly. It makes multiple contacts with different domains of the 23S rRNA in the assembled 50S subunit and ribosome. In terms of biological role, forms part of the polypeptide exit tunnel. The sequence is that of Large ribosomal subunit protein uL4 from Corynebacterium glutamicum (strain R).